A 379-amino-acid chain; its full sequence is UDP-N-acetylglucosamine--N-acetylmuramyl-(pentapeptide) pyrophosphoryl-undecaprenol N-acetylglucosamine transferase (379 aa).

UDP-N-acetyl-alpha-D-glucosamine contacts are provided by residues T19–G21, N133, R174, S207, I261, and Q306.

The protein belongs to the glycosyltransferase 28 family. MurG subfamily.

It is found in the cell inner membrane. It carries out the reaction di-trans,octa-cis-undecaprenyl diphospho-N-acetyl-alpha-D-muramoyl-L-alanyl-D-glutamyl-meso-2,6-diaminopimeloyl-D-alanyl-D-alanine + UDP-N-acetyl-alpha-D-glucosamine = di-trans,octa-cis-undecaprenyl diphospho-[N-acetyl-alpha-D-glucosaminyl-(1-&gt;4)]-N-acetyl-alpha-D-muramoyl-L-alanyl-D-glutamyl-meso-2,6-diaminopimeloyl-D-alanyl-D-alanine + UDP + H(+). Its pathway is cell wall biogenesis; peptidoglycan biosynthesis. Cell wall formation. Catalyzes the transfer of a GlcNAc subunit on undecaprenyl-pyrophosphoryl-MurNAc-pentapeptide (lipid intermediate I) to form undecaprenyl-pyrophosphoryl-MurNAc-(pentapeptide)GlcNAc (lipid intermediate II). This chain is UDP-N-acetylglucosamine--N-acetylmuramyl-(pentapeptide) pyrophosphoryl-undecaprenol N-acetylglucosamine transferase, found in Porphyromonas gingivalis (strain ATCC 33277 / DSM 20709 / CIP 103683 / JCM 12257 / NCTC 11834 / 2561).